The following is a 572-amino-acid chain: MKVITCEIAWHNKEPVYSLDFQHGATWKIHRLASAGVDTAVRIWKLERGPDGKAIVEFLSNLARHTKAVNVVRFSPTGEILASGGDDAVILLWKMNDSKEPEQIAFQDEEEAQLNKENWTVVKTLRGHLEDVYDICWATDGNLMTSASVDNTVIIWDVSKGQKISIFNEHKSYVQGVTWDPLGQYIATLSCDRVLRIYNTQKKRVAFNISKMLSGQGPEGEARSFRMFHDDSMKSFFRRLSFTPDGSLLLTPAGCMESGENVTNTTYVFSRKHLKRPIAHLPCPGKATLAVRCCPVYFELRPVAETEKASEEPSPELVNLPYRMVFAVASEDSVLLYDTQQSFPFGYVSNIHYHTLSDISWSSDGAFLAISSTDGYCTFVTFEKGELGIPLKEKPVLSIRTPDTAKKAKNQTHQGSSPGSRSVEGTPSNRTQDPSSPCTTPSPTTQSPAPSAIKDSPSAIPAGKSPLPQPSEEKTLQPAGQNMKAPQPRRVTLNTLQTWGKTAPRRINLTPLKTDTVPNPQPNSGTAPSTEEVQPEAPGEPPEEPPELKRPRLEEREGDAQNLAPDDSSKTV.

WD repeat units follow at residues 11–54 (HNKE…DGKA), 64–103 (RHTK…EPEQ), 127–166 (GHLE…KISI), 169–208 (EHKS…VAFN), 228–279 (FHDD…RPIA), 301–347 (RPVA…PFGY), and 351–392 (IHYH…IPLK). Phosphothreonine is present on threonine 401. The segment at 403-572 (DTAKKAKNQT…LAPDDSSKTV (170 aa)) is disordered. Residues 411 to 430 (QTHQGSSPGSRSVEGTPSNR) show a composition bias toward polar residues. Residue serine 416 is modified to Phosphoserine. Position 426 is a phosphothreonine (threonine 426). Low complexity predominate over residues 431–452 (TQDPSSPCTTPSPTTQSPAPSA). Serine 436 bears the Phosphoserine mark. The residue at position 440 (threonine 440) is a Phosphothreonine. Phosphoserine occurs at positions 456 and 465. An N6-acetyllysine modification is found at lysine 501. Phosphothreonine is present on residues threonine 502 and threonine 510. Polar residues predominate over residues 511-529 (PLKTDTVPNPQPNSGTAPS). The segment covering 546–559 (PELKRPRLEEREGD) has biased composition (basic and acidic residues).

It belongs to the WD repeat HIR1 family. Subunit of the CAF-1 complex that contains RBBP4, CHAF1B and CHAF1A. CHAF1A binds directly to CHAF1B. Interacts with histones H3.1, H3.2 and H3.1t.

The protein localises to the nucleus. It localises to the cytoplasm. Its function is as follows. Acts as a component of the histone chaperone complex chromatin assembly factor 1 (CAF-1), which assembles histone octamers onto DNA during replication and repair. CAF-1 performs the first step of the nucleosome assembly process, bringing newly synthesized histones H3 and H4 to replicating DNA; histones H2A/H2B can bind to this chromatin precursor subsequent to DNA replication to complete the histone octamer. This Mus musculus (Mouse) protein is Chromatin assembly factor 1 subunit B.